Consider the following 335-residue polypeptide: Taste receptor type 2 member 119 (335 aa).

The Extracellular portion of the chain corresponds to 1–7 (MMEGHML). A helical membrane pass occupies residues 8 to 28 (FFLLVVVVQFLTGVLANGLIV). Topologically, residues 29 to 43 (VVNAIDLIMWKKMAP) are cytoplasmic. A helical membrane pass occupies residues 44–64 (LDLLLFCLATSRIILQLCILF). Over 65–81 (AQLGLSCLVRHTLFADN) the chain is Extracellular. N-linked (GlcNAc...) asparagine glycosylation occurs at Asn81. A helical transmembrane segment spans residues 82–102 (VTFVYIINELSLWFATWLGVF). At 103–124 (YCAKIATIPHPLFLWLKMRISR) the chain is on the cytoplasmic side. Residues 125–145 (LVPWLILASVVYVTVTTFIHS) traverse the membrane as a helical segment. At 146–176 (RETSELPKQIFISFFSKNTTRVRPAHATLLS) the chain is on the extracellular side. An N-linked (GlcNAc...) asparagine glycan is attached at Asn163. The chain crosses the membrane as a helical span at residues 177 to 197 (VFVFGLTLPFLIFTVAVLLLL). Residues 198–224 (SSLWNHSRQMRTMVGTREPSRHALVSA) are Cytoplasmic-facing. Residues 225 to 245 (MLSILSFLILYLSHDMVAVLI) traverse the membrane as a helical segment. At 246 to 256 (CTQGLHFGSRT) the chain is on the extracellular side. The chain crosses the membrane as a helical span at residues 257-277 (FAFCLLVIGMYPSLHSIVLIL). The Cytoplasmic segment spans residues 278–335 (GNPKLKRNAKTFIVHCKCCHCARAWVTSRNPRLSDLPVPATHHSANKTSCSEACIMPS).

Belongs to the G-protein coupled receptor T2R family. As to expression, expressed in subsets of taste receptor cells of the tongue and palate epithelium and exclusively in gustducin-positive cells. Expressed in 15% taste bud cells in circumvallate and foliate papillae but only in 2% in fungiform papillae. Expressed in the gastro and duodenal tissue. Not expressed in colon, liver, heart and kidney.

Its subcellular location is the membrane. Gustducin-coupled receptor implicated in the perception of bitter compounds in the oral cavity and the gastrointestinal tract. Signals through PLCB2 and the calcium-regulated cation channel TRPM5. This Mus musculus (Mouse) protein is Taste receptor type 2 member 119 (Tas2r119).